The primary structure comprises 177 residues: Large ribosomal subunit protein uL6 (177 aa).

The protein belongs to the universal ribosomal protein uL6 family. In terms of assembly, part of the 50S ribosomal subunit.

Functionally, this protein binds to the 23S rRNA, and is important in its secondary structure. It is located near the subunit interface in the base of the L7/L12 stalk, and near the tRNA binding site of the peptidyltransferase center. The protein is Large ribosomal subunit protein uL6 of Vibrio parahaemolyticus serotype O3:K6 (strain RIMD 2210633).